A 442-amino-acid chain; its full sequence is Protein PHYTOCHROME KINASE SUBSTRATE 2 (442 aa).

The segment at 110-130 is disordered; that stretch reads IFVGPKQSSKNSSETPSLRSE. The span at 121–130 shows a compositional bias: low complexity; sequence SSETPSLRSE. Residues S239 and S245 each carry the phosphoserine modification. The segment at 394–442 is disordered; it reads VSGDSYTSMNRTPSYVPRFPVEANPTSTETRRRISSSSVSHTQSPFLYT. The span at 397 to 406 shows a compositional bias: polar residues; that stretch reads DSYTSMNRTP. Residues 428 to 442 show a composition bias toward low complexity; that stretch reads SSSSVSHTQSPFLYT.

Belongs to the PKS family. As to quaternary structure, interacts with PKS1, RPT3, PHOT1 and PHOT2. In terms of tissue distribution, expressed in leaves, with the strongest expression on edges of the laminas. Not found in roots.

Its subcellular location is the cell membrane. Functionally, acts predominantly in the phot1 pathway. Involved in the leaf positioning and also in the phot2 pathway controlling the leaf flattening. Component of the network that modulates the very low-fluence response (VLFR) branch of phyA signaling. Regulates phytochrome-mediated photomorphogenesis and hypocotyl phototropism. May act by controlling auxin homeostasis. This Arabidopsis thaliana (Mouse-ear cress) protein is Protein PHYTOCHROME KINASE SUBSTRATE 2 (PKS2).